The sequence spans 211 residues: Putative transposase for insertion sequence element IS402 (211 aa).

Positions 51–71 are disordered; it reads RRWGRPKTGPNPTDRARPGSK.

This sequence belongs to the transposase 11 family.

Functionally, involved in the transposition of the insertion sequence. This is Putative transposase for insertion sequence element IS402 from Burkholderia cepacia (Pseudomonas cepacia).